A 611-amino-acid polypeptide reads, in one-letter code: ANK repeat-containing protein nipk-1 (611 aa).

The stretch at 91–149 (NSKSKKKTENQETKEKDEEAEEKKDGPPKDDKELKMKKEKEQEDENAELDEQKKDGDLL) forms a coiled coil. Disordered stretches follow at residues 92 to 167 (SKSK…SHPY), 212 to 255 (ISAS…DTSR), and 280 to 333 (TKEE…LSPR). Residues 97 to 131 (KTENQETKEKDEEAEEKKDGPPKDDKELKMKKEKE) show a composition bias toward basic and acidic residues. Composition is skewed to polar residues over residues 212–223 (ISASTTPDTVLS), 239–255 (ESLQSPFSDISSADTSR), and 315–333 (GTCSGPTTPSFNQTRLSPR). ANK repeat units follow at residues 375-405 (DGDTPLHIVAAHNDLGKIYALCETLRKTMNE), 417-446 (FGETPLYVAVLQRSIEVVEYLLELGASPNS), 452-482 (VGDSPLHFATARGMNNMVEALLSKREIRVNE), 486-527 (DGQT…DPTI), and 532-561 (TGKTIVHHAVDKMDVELLDFLKTVVNEDTF).

It belongs to the iASPP family. Expressed in the nervous system.

In terms of biological role, acts downstream of the receptor complex composed of ilcr-1 and ilcr-2, which is a signaling complex that modulates neuronal activity and animal behavior in response to sensory neuron input. Mediates signaling of the complex. The protein is ANK repeat-containing protein nipk-1 of Caenorhabditis elegans.